The chain runs to 366 residues: Leucine-rich repeat-containing protein 58 (366 aa).

Ser19 carries the post-translational modification Phosphoserine. LRR repeat units lie at residues 40–61, 64–86, 87–108, 116–138, 139–161, 162–184, 185–206, 208–229, and 231–251; these read ALLR…LGGG, HLQL…LTLS, GLRT…PKGL, SLQV…LELR, ALQT…ENLR, SLEC…ANLP, SLNY…LSQL, SLRS…ILNL, and HLEE…RDLT. Residues 337–346 show a composition bias toward low complexity; the sequence is ASHSSTSQSE. The interval 337–356 is disordered; it reads ASHSSTSQSESDSEDEASVA.

This Mus musculus (Mouse) protein is Leucine-rich repeat-containing protein 58 (Lrrc58).